The chain runs to 189 residues: MSKPTREEATEAVRTLLKFIGEDPSREGLLQTPDRVINSYVEIFSGYGKDVAEILNTKFYETCNFQDFILLNIKFTSFCEHHILPFNGTVDIAYIPDNCIVGISKLARIVNIFARRLQIQEKMTVQIAESVQENLKPLGVAVKISAVHSCMSMRGVMQDNSVMNTMHYTGIFAEQQKYRHEFLNLTAKR.

Zn(2+) contacts are provided by Cys-79, His-82, and Cys-150.

The protein belongs to the GTP cyclohydrolase I family. Homomer.

The enzyme catalyses GTP + H2O = 7,8-dihydroneopterin 3'-triphosphate + formate + H(+). It participates in cofactor biosynthesis; 7,8-dihydroneopterin triphosphate biosynthesis; 7,8-dihydroneopterin triphosphate from GTP: step 1/1. This chain is GTP cyclohydrolase 1, found in Rickettsia africae (strain ESF-5).